The primary structure comprises 461 residues: Protein ultraspiracle homolog (461 aa).

A modulating region spans residues 1–112; it reads MSSVAKKDKR…NHPLSGSKHL (112 aa). The interval 26–51 is disordered; the sequence is PAPHQQQSMPSSQPSNFLQPLATPST. The segment covering 27-40 has biased composition (low complexity); it reads APHQQQSMPSSQPS. The segment covering 41–51 has biased composition (polar residues); it reads NFLQPLATPST. 2 consecutive NR C4-type zinc fingers follow at residues 113–133 and 149–173; these read CSIC…CEGC and CRED…YQKC. Residues 113–185 constitute a DNA-binding region (nuclear receptor); sequence CSICGDRASG…CGMKREAVQE (73 aa). The interval 185–192 is hinge; sequence EERQRAAR. The region spanning 203–452 is the NR LBD domain; that stretch reads VQELSIERLL…SYIHDALRNH (250 aa).

The protein belongs to the nuclear hormone receptor family. NR2 subfamily. Heterodimer of USP and ECR. Only the heterodimer is capable of high-affinity binding to ecdysone.

The protein resides in the nucleus. Its function is as follows. Receptor for ecdysone. May be an important modulator of insect metamorphosis. The chain is Protein ultraspiracle homolog (USP) from Manduca sexta (Tobacco hawkmoth).